Here is a 687-residue protein sequence, read N- to C-terminus: Histone deacetylase clr3 (687 aa).

A histone deacetylase region spans residues 55 to 385 (KKSGLCYDPR…ALAVAQSLLG (331 aa)). Residue histidine 195 is part of the active site.

Belongs to the histone deacetylase family. HD type 2 subfamily. Interacts with ccq1, clr1, clr2 and mit1.

It is found in the nucleus. The protein localises to the chromosome. It localises to the centromere. Its subcellular location is the telomere. It catalyses the reaction N(6)-acetyl-L-lysyl-[histone] + H2O = L-lysyl-[histone] + acetate. Functionally, responsible for the deacetylation of lysine residues on the N-terminal part of the core histones (H2A, H2B, H3 and H4). Histone deacetylation gives a tag for epigenetic repression and plays an important role in transcriptional regulation, cell cycle progression and developmental events. Histone deacetylases act via the formation of large multiprotein complexes. Required for proper positioning of nucleosomes at heterochromatic loci and for transcriptional gene silencing (TGS) function of the Snf2/Hdac-containing repressor complex (SHREC). The polypeptide is Histone deacetylase clr3 (clr3) (Schizosaccharomyces pombe (strain 972 / ATCC 24843) (Fission yeast)).